Here is a 238-residue protein sequence, read N- to C-terminus: Insulin-like growth factor-binding protein 6 (238 aa).

The N-terminal stretch at 1-25 (MTWDGLPTQPLLMLLMLLFAAGSGS) is a signal peptide. Residues 26-108 (ALAGCPGCGA…LIGQGRCQRA (83 aa)) enclose the IGFBP N-terminal domain. Cystine bridges form between C30/C33, C41/C45, C58/C64, C72/C85, and C79/C105. The segment at 104–159 (RCQRARGPSEETTKESKPQGGASRSRDTNHRDRQKNPRTSAAPIRPNPVQDSEMGP) is disordered. Composition is skewed to basic and acidic residues over residues 110 to 120 (GPSEETTKESK) and 127 to 138 (RSRDTNHRDRQK). The region spanning 157-232 (MGPCRRHLDS…SPDGQGSTQC (76 aa)) is the Thyroglobulin type-1 domain. Cystine bridges form between C160–C188, C199–C210, and C212–C232. Positions 218-238 (QPLPVSPDGQGSTQCSARSSG) are disordered. The segment covering 226–238 (GQGSTQCSARSSG) has biased composition (polar residues).

In terms of assembly, interacts (via C-terminal domain) with PHB2. Post-translationally, O-glycosylated.

It localises to the secreted. In terms of biological role, IGF-binding proteins prolong the half-life of the IGFs and have been shown to either inhibit or stimulate the growth promoting effects of the IGFs on cell culture. They alter the interaction of IGFs with their cell surface receptors. Activates the MAPK signaling pathway and induces cell migration. This Mus musculus (Mouse) protein is Insulin-like growth factor-binding protein 6 (Igfbp6).